A 363-amino-acid chain; its full sequence is 3-isopropylmalate dehydrogenase (363 aa).

Residue 78-89 (GPKWGTGAVRPE) participates in NAD(+) binding. Substrate-binding residues include Arg-96, Arg-106, Arg-135, and Asp-224. Residues Asp-224, Asp-249, and Asp-253 each coordinate Mg(2+). An NAD(+)-binding site is contributed by 288–299 (GSAPDLPANKVN).

The protein belongs to the isocitrate and isopropylmalate dehydrogenases family. As to quaternary structure, homodimer. Mg(2+) is required as a cofactor. The cofactor is Mn(2+).

Its subcellular location is the cytoplasm. The catalysed reaction is (2R,3S)-3-isopropylmalate + NAD(+) = 4-methyl-2-oxopentanoate + CO2 + NADH. Its pathway is amino-acid biosynthesis; L-leucine biosynthesis; L-leucine from 3-methyl-2-oxobutanoate: step 3/4. In terms of biological role, catalyzes the oxidation of 3-carboxy-2-hydroxy-4-methylpentanoate (3-isopropylmalate) to 3-carboxy-4-methyl-2-oxopentanoate. The product decarboxylates to 4-methyl-2 oxopentanoate. The chain is 3-isopropylmalate dehydrogenase (LEU2) from Cyberlindnera jadinii (Torula yeast).